A 276-amino-acid chain; its full sequence is Small ribosomal subunit protein uS2 (276 aa).

The segment at 255–276 (ASATATAAPTEAGAPEPTTDPS) is disordered.

The protein belongs to the universal ribosomal protein uS2 family.

The protein is Small ribosomal subunit protein uS2 of Mycolicibacterium paratuberculosis (strain ATCC BAA-968 / K-10) (Mycobacterium paratuberculosis).